The chain runs to 226 residues: 2-C-methyl-D-erythritol 4-phosphate cytidylyltransferase (226 aa).

It belongs to the IspD/TarI cytidylyltransferase family. IspD subfamily.

The enzyme catalyses 2-C-methyl-D-erythritol 4-phosphate + CTP + H(+) = 4-CDP-2-C-methyl-D-erythritol + diphosphate. The protein operates within isoprenoid biosynthesis; isopentenyl diphosphate biosynthesis via DXP pathway; isopentenyl diphosphate from 1-deoxy-D-xylulose 5-phosphate: step 2/6. Its function is as follows. Catalyzes the formation of 4-diphosphocytidyl-2-C-methyl-D-erythritol from CTP and 2-C-methyl-D-erythritol 4-phosphate (MEP). This is 2-C-methyl-D-erythritol 4-phosphate cytidylyltransferase from Bacillus mycoides (strain KBAB4) (Bacillus weihenstephanensis).